The sequence spans 129 residues: Cytochrome c-type protein SHP (129 aa).

Residues 1 to 17 (MTRFLILSAVLAGPALA) form the signal peptide. Cys60, Cys63, and His64 together coordinate heme c. Residues Cys106 and Cys114 are joined by a disulfide bond.

Binds 1 heme c group covalently per subunit.

Its function is as follows. High-spin cytochrome. Transiently bind oxygen during autoxidation, which occurs with a half-life of 3 minutes with a 4-fold excess of O(2). Also binds carbon monoxide, azide and cyanide. In Cereibacter sphaeroides (strain ATCC 17023 / DSM 158 / JCM 6121 / CCUG 31486 / LMG 2827 / NBRC 12203 / NCIMB 8253 / ATH 2.4.1.) (Rhodobacter sphaeroides), this protein is Cytochrome c-type protein SHP (shp).